The following is a 328-amino-acid chain: GMP reductase (328 aa).

The active-site Thioimidate intermediate is cysteine 176. NADP(+) is bound at residue 205–228 (IIADGGIRTHGDIAKSIRFGASMI).

This sequence belongs to the IMPDH/GMPR family. GuaC type 2 subfamily.

It carries out the reaction IMP + NH4(+) + NADP(+) = GMP + NADPH + 2 H(+). In terms of biological role, catalyzes the irreversible NADPH-dependent deamination of GMP to IMP. It functions in the conversion of nucleobase, nucleoside and nucleotide derivatives of G to A nucleotides, and in maintaining the intracellular balance of A and G nucleotides. The sequence is that of GMP reductase from Streptococcus pneumoniae (strain P1031).